A 945-amino-acid chain; its full sequence is Isoleucine--tRNA ligase (945 aa).

Residues 1-10 (MSNKKADSKP) show a composition bias toward basic and acidic residues. The interval 1–21 (MSNKKADSKPQAKYPVNLLDT) is disordered. Residues 66–76 (PYANGDIHLGH) carry the 'HIGH' region motif. E581 contributes to the L-isoleucyl-5'-AMP binding site. Positions 622–626 (KMSKS) match the 'KMSKS' region motif. K625 serves as a coordination point for ATP. C908, C911, C928, and C931 together coordinate Zn(2+).

It belongs to the class-I aminoacyl-tRNA synthetase family. IleS type 1 subfamily. As to quaternary structure, monomer. It depends on Zn(2+) as a cofactor.

It localises to the cytoplasm. The catalysed reaction is tRNA(Ile) + L-isoleucine + ATP = L-isoleucyl-tRNA(Ile) + AMP + diphosphate. Catalyzes the attachment of isoleucine to tRNA(Ile). As IleRS can inadvertently accommodate and process structurally similar amino acids such as valine, to avoid such errors it has two additional distinct tRNA(Ile)-dependent editing activities. One activity is designated as 'pretransfer' editing and involves the hydrolysis of activated Val-AMP. The other activity is designated 'posttransfer' editing and involves deacylation of mischarged Val-tRNA(Ile). In Burkholderia multivorans (strain ATCC 17616 / 249), this protein is Isoleucine--tRNA ligase.